Consider the following 284-residue polypeptide: F-box protein PP2-B5 (284 aa).

An F-box domain is found at 32–80 (ASFDDLPDDCLAIISSFTSTPRDAFLAALVSKSFGLQFNSDSVWEKFLP).

The chain is F-box protein PP2-B5 (PP2B5) from Arabidopsis thaliana (Mouse-ear cress).